The chain runs to 160 residues: S-ribosylhomocysteine lyase (160 aa).

Fe cation contacts are provided by H57, H61, and C127.

Belongs to the LuxS family. As to quaternary structure, homodimer. Requires Fe cation as cofactor.

It carries out the reaction S-(5-deoxy-D-ribos-5-yl)-L-homocysteine = (S)-4,5-dihydroxypentane-2,3-dione + L-homocysteine. Its function is as follows. Involved in the synthesis of autoinducer 2 (AI-2) which is secreted by bacteria and is used to communicate both the cell density and the metabolic potential of the environment. The regulation of gene expression in response to changes in cell density is called quorum sensing. Catalyzes the transformation of S-ribosylhomocysteine (RHC) to homocysteine (HC) and 4,5-dihydroxy-2,3-pentadione (DPD). In Streptococcus gordonii (strain Challis / ATCC 35105 / BCRC 15272 / CH1 / DL1 / V288), this protein is S-ribosylhomocysteine lyase.